A 142-amino-acid polypeptide reads, in one-letter code: Putative phosphatidylglycerol/phosphatidylinositol transfer protein 2 (142 aa).

The N-terminal stretch at 1-20 (MKFYLYLSILLILLTSTSFG) is a signal peptide.

The protein belongs to the NPC2 family. Monomer.

Its function is as follows. Catalyzes the intermembrane transfer of phosphatidylglycerol and phosphatidylinositol. The polypeptide is Putative phosphatidylglycerol/phosphatidylinositol transfer protein 2 (Dictyostelium discoideum (Social amoeba)).